Reading from the N-terminus, the 372-residue chain is MPLINMPDFAGALLDDFAARGAARVDTPVIQPAEPFLDMAGEDLRRRIFLTESETGESLCLRPEFTIPVCLSHIENATGTPKRYAYLGEVFRQRREGGNEFYQAGIEDLGEPATARADARAINDAIGILHKLLPGRPLTVMLGDQAVFEAVVKTLGLPSGWQRRLIQAFGDSTHLDQLLKTLASPQTAHGLDPAVEALLSSGDEAGLIAHLDRTMEDTGYSTNASRSPREIAARLKEKLALAETRLDGAALLLLREFLSLELPLSEATAALAGFADAAGLSLGAALDGFEARIAALADLGVDLSRITYRAAFGRPLDYYTGLVFEVALSGETAVLAGGGRFDRLLTLLGAKHTIPAVGFSLWLDRIELARAR.

The protein belongs to the class-II aminoacyl-tRNA synthetase family. HisZ subfamily. Heteromultimer composed of HisG and HisZ subunits.

Its subcellular location is the cytoplasm. The protein operates within amino-acid biosynthesis; L-histidine biosynthesis; L-histidine from 5-phospho-alpha-D-ribose 1-diphosphate: step 1/9. Its function is as follows. Required for the first step of histidine biosynthesis. May allow the feedback regulation of ATP phosphoribosyltransferase activity by histidine. This Allorhizobium ampelinum (strain ATCC BAA-846 / DSM 112012 / S4) (Agrobacterium vitis (strain S4)) protein is ATP phosphoribosyltransferase regulatory subunit.